Here is a 515-residue protein sequence, read N- to C-terminus: MSSYKPLAIPTYPKLGEKITQDTLYWKRYKTPVQIKEFGAVTKIHFSPIQPFSYAVTSSTRIHLYGQYSQEPVKTFSRFKDTAYCGTYRGDGKLLAAGCEDSVVQLFDISGKAALRQFSGHSKAVHFVDFTSDKYRIVSGSDDYTSKLWDIPNGIEIASYKEHTDYIRCGCTSSLNNDLFATGSYDHTIKVFDGRTDKSVMSMDHGQPVESVLLFPSGGLLVSAGGRYVKVWDILKGGQLLVSLRNHHKTVTCLCLSSSGQRLLSGSLDRHVKVYSTMNYKVVHSFDYAASILSLALAPDDQMIVVGMTNGVLNIKHRKPEERKPLQSTTKRHPRYRVFVRGKDYMPKQDDIYVSKPVREHLKKYDQLLKGFHMSKALDAVLQSQIRTKKPEVTVAVMNELKRRGTLKNALAGRNEKELSDLLIFLLKHLVNPLFLPILLNVAEHIIDIYSPVVGQSSVIHKQFIRLQEVVEKEINYQEELLKILGMMDTLFATMTTKKESPWEEPKPILPLGSQ.

7 WD repeats span residues Lys36–Thr75, Arg78–Gln117, Gly120–Ser159, Glu162–Ser202, Asp204–Val242, Asn246–Ser285, and Asp287–Leu326.

As to quaternary structure, part of the small subunit (SSU) processome, composed of more than 70 proteins and the RNA chaperone small nucleolar RNA (snoRNA) U3. May be a component of the proposed t-UTP subcomplex of the ribosomal small subunit (SSU) processome.

It localises to the nucleus. Its subcellular location is the nucleolus. Ribosome biogenesis factor. Involved in nucleolar processing of pre-18S ribosomal RNA. Required for optimal pre-ribosomal RNA transcription by RNA polymerase I. Part of the small subunit (SSU) processome, first precursor of the small eukaryotic ribosomal subunit. During the assembly of the SSU processome in the nucleolus, many ribosome biogenesis factors, an RNA chaperone and ribosomal proteins associate with the nascent pre-rRNA and work in concert to generate RNA folding, modifications, rearrangements and cleavage as well as targeted degradation of pre-ribosomal RNA by the RNA exosome. This chain is U3 small nucleolar RNA-associated protein 15 homolog (utp15), found in Xenopus laevis (African clawed frog).